Here is a 467-residue protein sequence, read N- to C-terminus: Ribulose bisphosphate carboxylase large chain (467 aa).

Lysine 5 is subject to N6,N6,N6-trimethyllysine. Residues asparagine 114 and threonine 164 each coordinate substrate. Lysine 166 (proton acceptor) is an active-site residue. Position 168 (lysine 168) interacts with substrate. Residues lysine 192, aspartate 194, and glutamate 195 each coordinate Mg(2+). Lysine 192 carries the N6-carboxylysine modification. The active-site Proton acceptor is the histidine 285. Arginine 286, histidine 318, and serine 370 together coordinate substrate.

Belongs to the RuBisCO large chain family. Type I subfamily. Heterohexadecamer of 8 large chains and 8 small chains; disulfide-linked. The disulfide link is formed within the large subunit homodimers. It depends on Mg(2+) as a cofactor. The disulfide bond which can form in the large chain dimeric partners within the hexadecamer appears to be associated with oxidative stress and protein turnover.

It is found in the plastid. Its subcellular location is the chloroplast. The enzyme catalyses 2 (2R)-3-phosphoglycerate + 2 H(+) = D-ribulose 1,5-bisphosphate + CO2 + H2O. The catalysed reaction is D-ribulose 1,5-bisphosphate + O2 = 2-phosphoglycolate + (2R)-3-phosphoglycerate + 2 H(+). RuBisCO catalyzes two reactions: the carboxylation of D-ribulose 1,5-bisphosphate, the primary event in carbon dioxide fixation, as well as the oxidative fragmentation of the pentose substrate in the photorespiration process. Both reactions occur simultaneously and in competition at the same active site. This Hydrophyllum virginianum (Eastern waterleaf) protein is Ribulose bisphosphate carboxylase large chain.